We begin with the raw amino-acid sequence, 140 residues long: Chromatin accessibility complex 16kD protein (140 aa).

Residues 111-140 (LNRSAGSDDDDDDDDDDDEEESESESESDE) form a disordered region. Residues 117 to 140 (SDDDDDDDDDDDEEESESESESDE) are compositionally biased toward acidic residues.

In terms of assembly, component of the chromatin accessibility complex (CHRAC), composed of Chrac-14, Chrac-16, Acf and Iswi. Forms a heterodimer with Chrac-14. The Chrac-14/Chrac-16 heterodimer interacts with Acf (via N-terminus). Stabilizes the interaction between Chrac-14 and Iswi.

Its subcellular location is the nucleus. Functionally, histone-like protein which promotes nucleosome sliding of ATP-dependent nucleosome remodeling complexes. Part of the chromatin-accessibility complex (CHRAC) which uses energy/ATP to increase the general accessibility of DNA in chromatin. As a heterodimer with Chrac-14, binds DNA and facilitates nucleosome sliding by Acf. As part of the CHRAC complex, required for oogenesis. This Drosophila melanogaster (Fruit fly) protein is Chromatin accessibility complex 16kD protein.